Here is a 509-residue protein sequence, read N- to C-terminus: UDP-N-acetylmuramyl-tripeptide synthetase (509 aa).

124–130 (GTNGKTS) is an ATP binding site. UDP-N-acetyl-alpha-D-muramoyl-L-alanyl-D-glutamate contacts are provided by residues 164–165 (TT), Ser191, and Arg199. The residue at position 231 (Lys231) is an N6-carboxylysine.

Belongs to the MurCDEF family. MurE subfamily. In terms of processing, carboxylation is probably crucial for Mg(2+) binding and, consequently, for the gamma-phosphate positioning of ATP.

The protein resides in the cytoplasm. It participates in cell wall biogenesis; peptidoglycan biosynthesis. Its function is as follows. Catalyzes the addition of an amino acid to the nucleotide precursor UDP-N-acetylmuramoyl-L-alanyl-D-glutamate (UMAG) in the biosynthesis of bacterial cell-wall peptidoglycan. This chain is UDP-N-acetylmuramyl-tripeptide synthetase, found in Tropheryma whipplei (strain TW08/27) (Whipple's bacillus).